Consider the following 224-residue polypeptide: DNNVLLTGDVIHTDNQLSYESAAFVMQGDCNLVLYNEAGGFQSNTHGRGVDCTLRLNNRGQLEIHSANSNTPVWVYPRSVNTVRGNYAATLGPDQHVTIYGPAIWSTPAAANIPRVRNVLFSSQVMYDNAQLATRDYSLVMRDDCNLVLTKGSKTNIVWESGTSGRGQHCFMRLGHSGELDITDDRLNTVFVSNTVGQEGDYVLILQINGQAVVYGPAVWSTAA.

2 consecutive Bulb-type lectin domains span residues 2-111 and 117-222; these read NNVL…PAAA and RNVL…VWST. 2 cysteine pairs are disulfide-bonded: Cys30–Cys52 and Cys145–Cys170.

As to quaternary structure, heterotetramer of 2 domain 1 and 2 domain 2 chains arranged as a dimer of domain 1/domain 2 heterodimers.

In terms of biological role, mannose-specific lectin. Has weak agglutinating activity towards trypsin-treated erythrocytes from rabbit but not from human. In Crocus vernus (Dutch crocus), this protein is Mannose-specific lectin 3.